A 640-amino-acid chain; its full sequence is RAP domain-containing protein, chloroplastic (640 aa).

The N-terminal 32 residues, 1 to 32, are a transit peptide targeting the chloroplast; it reads MEAALLRPPPLAARGGVSIAIAFSVSRLPSAA. Residues 111–158 are disordered; that stretch reads SLQRMVASPKKKNKKKKSKKTNLKQKKAAEPKPPRDTDDDEDDEEEAD. A compositionally biased stretch (basic residues) spans 119–136; the sequence is PKKKNKKKKSKKTNLKQK. A compositionally biased stretch (basic and acidic residues) spans 137–146; sequence KAAEPKPPRD. The span at 147–158 shows a compositional bias: acidic residues; sequence TDDDEDDEEEAD. In terms of domain architecture, RAP spans 575–633; it reads LAFEIDGPSHFSRNLGTPLGHTAFKRRYIAAAGWNLVSLSHQEWENLEGEFEQLEYLRR.

In terms of tissue distribution, expressed in roots, leaf sheaths, veins of leaf blade, mature leaves, endodermis of culm, panicles and anthers.

It localises to the plastid. The protein localises to the chloroplast. Its function is as follows. Probable RNA-binding protein that plays an essential role in chloroplast development. Regulates the ribosomal proteins homeostasis and ribosomal RNA development in chloroplasts. Involved the regulation of 16S rRNA and required for the expression of chloroplast-associated photosynthetic genes. This Oryza sativa subsp. japonica (Rice) protein is RAP domain-containing protein, chloroplastic.